We begin with the raw amino-acid sequence, 367 residues long: Alcohol dehydrogenase 2 (367 aa).

Positions 48, 74, 107, 110, 113, 121, and 163 each coordinate Zn(2+). NAD(+) is bound by residues 187-193, aspartate 212, lysine 216, 286-288, and arginine 361; these read GAGGGLG and VGI.

It belongs to the zinc-containing alcohol dehydrogenase family. In terms of assembly, homotetramer. Requires Zn(2+) as cofactor.

Its subcellular location is the cytoplasm. The enzyme catalyses a primary alcohol + NAD(+) = an aldehyde + NADH + H(+). It carries out the reaction a secondary alcohol + NAD(+) = a ketone + NADH + H(+). This is Alcohol dehydrogenase 2 (alcB) from Emericella nidulans (strain FGSC A4 / ATCC 38163 / CBS 112.46 / NRRL 194 / M139) (Aspergillus nidulans).